A 1132-amino-acid chain; its full sequence is APC membrane recruitment protein 1 (1132 aa).

M1 carries the N-acetylmethionine modification. Residues 1–21 are compositionally biased toward polar residues; it reads MESQQDEAVQTKGASTSSDAQ. Disordered stretches follow at residues 1-256, 268-301, 338-423, 469-505, 674-699, 736-770, 924-949, and 1038-1132; these read MESQ…ACKN, FMQPKPVLEGGSLEEPHTSETEGKVVAGEVNPPN, SMTD…GEEN, GLGELLTPQSDQQESAPNSDEGYYDSTTPGFEDDSGE, TSGGSQTSHRGTTSAFPATSSSEPDW, MQEANFGGSPRKAYPSYSPPEEPEEEEEEKEGNAT, ELQAHQEDSDEEGEEEEGEWGRDSPL, and SQAS…NLAK. The span at 24–35 shows a compositional bias: basic and acidic residues; it reads GAEKGAKNKTTE. The segment covering 121-133 has biased composition (low complexity); that stretch reads SKSSAQFPSSQSA. 3 stretches are compositionally biased toward basic and acidic residues: residues 195–208, 218–229, and 281–290; these read KELEGARTRSHEHV, EIFRDTRKENAK, and EEPHTSETEG. The span at 372–423 shows a compositional bias: acidic residues; the sequence is ALPDDDDNDDEEEEEEEEEEEEEEEEEEEEEEEEEEEELLEDEEEVKDGEEN. Composition is skewed to polar residues over residues 475–486 and 677–696; these read TPQSDQQESAPN and GSQTSHRGTTSAFPATSSSE. 2 stretches are compositionally biased toward acidic residues: residues 756–765 and 931–941; these read EEPEEEEEEK and DSDEEGEEEEG. Composition is skewed to polar residues over residues 1059 to 1072 and 1115 to 1132; these read SCSSISGANSQSQA and ASLSTSYSSTAMNGNLAK.

The protein belongs to the Amer family. In terms of assembly, interacts with CTNNB1, AXIN1, LRP6, KEAP1, APC and BTRC. Interacts with SCF (SKP1-CUL1-F-box protein) E3 ubiquitin-protein ligase complexes containing BTRC and/or FBXW11. Identified in the beta-catenin destruction complex containing CTNNB1, APC, AXIN1 and AXIN2. Interacts with WT1. As to expression, expressed in kidney.

The protein resides in the cytoplasm. It is found in the cell membrane. The protein localises to the nucleus. In terms of biological role, regulator of the canonical Wnt signaling pathway. Acts by specifically binding phosphatidylinositol 4,5-bisphosphate (PtdIns(4,5)P2), translocating to the cell membrane and interacting with key regulators of the canonical Wnt signaling pathway, such as components of the beta-catenin destruction complex. Acts both as a positive and negative regulator of the Wnt signaling pathway, depending on the context: acts as a positive regulator by promoting LRP6 phosphorylation. Also acts as a negative regulator by acting as a scaffold protein for the beta-catenin destruction complex and promoting stabilization of Axin at the cell membrane. Promotes CTNNB1 ubiquitination and degradation. Involved in kidney development. This is APC membrane recruitment protein 1 (Amer1) from Mus musculus (Mouse).